Here is a 261-residue protein sequence, read N- to C-terminus: Trifolitoxin immunity protein (261 aa).

Required for TFX resistance. The protein is Trifolitoxin immunity protein (tfxG) of Rhizobium leguminosarum bv. trifolii.